Consider the following 764-residue polypeptide: Subtilisin-like protease SBT1.6 (764 aa).

Residues 1–20 (MASSTIVLLLFLSFPFISFA) form the signal peptide. Positions 46–99 (HWYSTEFAEESRIVHVYHTVFHGFSAVVTPDEADNLRNHPAVLAVFEDRRRELH) constitute an Inhibitor I9 domain. The Peptidase S8 domain maps to 103-606 (SPQFLGLQNQ…SGHLNLGRAM (504 aa)). Catalysis depends on Asp-131, which acts as the Charge relay system. Asn-191 carries N-linked (GlcNAc...) asparagine glycosylation. His-205 (charge relay system) is an active-site residue. The region spanning 377–457 (SSASLCMENT…NEGDRIKAYA (81 aa)) is the PA domain. Ser-538 acts as the Charge relay system in catalysis. Asn-578 carries N-linked (GlcNAc...) asparagine glycosylation.

It belongs to the peptidase S8 family. Expressed in roots, leaves and flowers of mature plants.

The chain is Subtilisin-like protease SBT1.6 from Arabidopsis thaliana (Mouse-ear cress).